Consider the following 564-residue polypeptide: Benomyl/methotrexate resistance protein (564 aa).

The disordered stretch occupies residues 60–101 (IDNQGEPNSSQSSSSNNTIVDNNNNNNNDVDGDKIVVTWDGD). Positions 67–88 (NSSQSSSSNNTIVDNNNNNNND) are enriched in low complexity. 12 helical membrane passes run 116–136 (AFFIFQISFLTTSVYMGSAVY), 153–173 (VATLPLTLFVIGYGVGPLVFS), 184–204 (TSIYIITLFLFVILQIPTALV), 210–229 (LCILRFLGGFFASPCLATGG), 241–262 (LPVGLAAWSLGAVCGPSFGPFF), 274–294 (WTFWFMCIISGFSFVMLCFTL), 358–374 (IYIAMVYSILYLFFEVF), 393–411 (YMSIVIGIVIAAFIYIPVI), 431–451 (IPIAIVGGILLTSGLFIFGWS), 457–476 (HWVGPLFGAATTASGAFLIF), 489–506 (PHYIASVFASNDLFRSVI), and 530–551 (WGSSVLGFITLVMIAIPVLFYL).

This sequence belongs to the major facilitator superfamily. CAR1 family.

It localises to the membrane. In terms of biological role, probable transporter. Confers resistance to benomyl and methotrexate. The protein is Benomyl/methotrexate resistance protein (MDR1) of Candida albicans (Yeast).